The chain runs to 96 residues: Co-chaperonin GroES (96 aa).

The protein belongs to the GroES chaperonin family. As to quaternary structure, heptamer of 7 subunits arranged in a ring. Interacts with the chaperonin GroEL.

It localises to the cytoplasm. Functionally, together with the chaperonin GroEL, plays an essential role in assisting protein folding. The GroEL-GroES system forms a nano-cage that allows encapsulation of the non-native substrate proteins and provides a physical environment optimized to promote and accelerate protein folding. GroES binds to the apical surface of the GroEL ring, thereby capping the opening of the GroEL channel. This is Co-chaperonin GroES from Actinobacillus pleuropneumoniae serotype 5b (strain L20).